The following is a 371-amino-acid chain: Probable palmitoyltransferase ZDHHC11B (371 aa).

The next 2 membrane-spanning stretches (helical) occupy residues 43–63 and 70–90; these read VVTWAVFVGLSLATFRIFIPL and YIAYVVTGGIFSFHLVVHLIA. In terms of domain architecture, DHHC spans 125–175; it reads QFCHLCKVTVNKKTKHCISCNKCVSGFDHHCKWINNCVGSRNYWFFFSTVA. Cys155 acts as the S-palmitoyl cysteine intermediate in catalysis. The next 3 membrane-spanning stretches (helical) occupy residues 177–197, 216–236, and 239–259; these read ATAGMLCLIAILLYVLVQYLV, TWLLFLPLFPVQVQTLIVVII, and LVLLLDLLGLVQLGQLLIFHI. Residues 335-371 are disordered; the sequence is DGDSKAQEADDAPSTSTLGLQQETTEPMKTDSAESED. Over residues 347–359 the composition is skewed to polar residues; that stretch reads PSTSTLGLQQETT. Positions 360-371 are enriched in basic and acidic residues; that stretch reads EPMKTDSAESED.

The protein belongs to the DHHC palmitoyltransferase family.

It localises to the membrane. It catalyses the reaction L-cysteinyl-[protein] + hexadecanoyl-CoA = S-hexadecanoyl-L-cysteinyl-[protein] + CoA. Probable palmitoyltransferase that could catalyze the addition of palmitate onto various protein substrates and be involved in a variety of cellular processes. May play a role in cell proliferation. In Homo sapiens (Human), this protein is Probable palmitoyltransferase ZDHHC11B.